The sequence spans 373 residues: D-alanine--D-alanine ligase A (373 aa).

The ATP-grasp domain maps to 146-355; that stretch reads KRLAEFAGIP…YGELLSRLVD (210 aa). 179–234 lines the ATP pocket; it reads VEGLSLPVFVKPCNMGSSVGIHKVKTQDALEAALDDAFRYDVKVLVQQGIDAREIE. Residues D308, E322, and N324 each contribute to the Mg(2+) site.

It belongs to the D-alanine--D-alanine ligase family. Requires Mg(2+) as cofactor. It depends on Mn(2+) as a cofactor.

Its subcellular location is the cytoplasm. The enzyme catalyses 2 D-alanine + ATP = D-alanyl-D-alanine + ADP + phosphate + H(+). The protein operates within cell wall biogenesis; peptidoglycan biosynthesis. In terms of biological role, cell wall formation. This Bradyrhizobium diazoefficiens (strain JCM 10833 / BCRC 13528 / IAM 13628 / NBRC 14792 / USDA 110) protein is D-alanine--D-alanine ligase A.